The primary structure comprises 124 residues: Fluoride-specific ion channel FluC (124 aa).

A run of 4 helical transmembrane segments spans residues 4-24, 32-52, 68-88, and 96-116; these read VIFIGIFGALGCLCRYYLSGW, AFPYGTFAVNIIGAFLIGLIM, GLTIGFLGGLTTFSTFSYETF, and LLIASVNVLTSVLVCLVFTWL. 2 residues coordinate Na(+): glycine 75 and threonine 78.

This sequence belongs to the fluoride channel Fluc/FEX (TC 1.A.43) family.

Its subcellular location is the cell inner membrane. It catalyses the reaction fluoride(in) = fluoride(out). Its activity is regulated as follows. Na(+) is not transported, but it plays an essential structural role and its presence is essential for fluoride channel function. Functionally, fluoride-specific ion channel. Important for reducing fluoride concentration in the cell, thus reducing its toxicity. The sequence is that of Fluoride-specific ion channel FluC from Geotalea daltonii (strain DSM 22248 / JCM 15807 / FRC-32) (Geobacter daltonii).